The sequence spans 116 residues: Ferredoxin-like protein in nif region (116 aa).

The region spanning 2–29 (AYTITSQCISCKLCSSVCPTGAIKVAED) is the 4Fe-4S ferredoxin-type domain. Residues C9, C12, C15, and C19 each coordinate iron-sulfur cluster.

This chain is Ferredoxin-like protein in nif region (fdxN), found in Trichormus azollae (Anabaena azollae).